Reading from the N-terminus, the 161-residue chain is Zinc metalloproteinase/disintegrin (161 aa).

Residues 1 to 72 (ERDLLVAVTM…ENPQCILNKH (72 aa)) enclose the Peptidase M12B domain. Residue His12 coordinates Zn(2+). The active site involves Glu13. 2 residues coordinate Zn(2+): His16 and His22. 2 disulfides stabilise this stretch: Cys27–Cys51 and Cys29–Cys34. Residues 73-88 (LRTDTVSTPVSGNELL) constitute a propeptide that is removed on maturation. One can recognise a Disintegrin domain in the interval 89–161 (EAGEECDCGT…ADCPRNRFHA (73 aa)). 6 disulfides stabilise this stretch: Cys94–Cys109, Cys96–Cys104, Cys103–Cys126, Cys117–Cys123, Cys122–Cys147, and Cys135–Cys154. Residues 139-141 (RGD) carry the Cell attachment site motif.

It belongs to the venom metalloproteinase (M12B) family. P-II subfamily. P-IIa sub-subfamily. In terms of assembly, monomer. In terms of tissue distribution, expressed by the venom gland.

It is found in the secreted. Impairs hemostasis in the envenomed animal. In terms of biological role, disintegrin: inhibit platelet aggregation induced by ADP, thrombin, platelet-activating factor and collagen. Acts by inhibiting fibrinogen interaction with platelet receptors GPIIb/GPIIIa (ITGA2B/ITGB3). This chain is Zinc metalloproteinase/disintegrin, found in Bothrops jararaca (Jararaca).